The primary structure comprises 123 residues: Small ribosomal subunit protein uS12 (123 aa).

Positions 1–28 (MPTIQQLIRNPREPKRTRTKTPALKACP) are disordered. A 3-methylthioaspartic acid modification is found at Asp-89. Residues 104 to 123 (TQPVKNRKQRRSHYGAKKPK) form a disordered region. The segment covering 108-123 (KNRKQRRSHYGAKKPK) has biased composition (basic residues).

This sequence belongs to the universal ribosomal protein uS12 family. In terms of assembly, part of the 30S ribosomal subunit. Contacts proteins S8 and S17. May interact with IF1 in the 30S initiation complex.

Functionally, with S4 and S5 plays an important role in translational accuracy. In terms of biological role, interacts with and stabilizes bases of the 16S rRNA that are involved in tRNA selection in the A site and with the mRNA backbone. Located at the interface of the 30S and 50S subunits, it traverses the body of the 30S subunit contacting proteins on the other side and probably holding the rRNA structure together. The combined cluster of proteins S8, S12 and S17 appears to hold together the shoulder and platform of the 30S subunit. The protein is Small ribosomal subunit protein uS12 of Hyphomonas neptunium (strain ATCC 15444).